The primary structure comprises 395 residues: Small ribosomal subunit protein mS31 (395 aa).

The transit peptide at 1–65 (MFPRVSTFLP…IQRYFGTNSV (65 aa)) directs the protein to the mitochondrion. 2 disordered regions span residues 70–97 (KDKQ…NTKK) and 175–196 (SELL…DAKR). Over residues 183–196 (QHEEESRAQRDAKR) the composition is skewed to basic and acidic residues.

It belongs to the mitochondrion-specific ribosomal protein mS31 family. Component of the mitochondrial small ribosomal subunit (mt-SSU). Mature mammalian 55S mitochondrial ribosomes consist of a small (28S) and a large (39S) subunit. The 28S small subunit contains a 12S ribosomal RNA (12S mt-rRNA) and 30 different proteins. The 39S large subunit contains a 16S rRNA (16S mt-rRNA), a copy of mitochondrial valine transfer RNA (mt-tRNA(Val)), which plays an integral structural role, and 52 different proteins.

Its subcellular location is the mitochondrion. This is Small ribosomal subunit protein mS31 (MRPS31) from Homo sapiens (Human).